Here is a 935-residue protein sequence, read N- to C-terminus: Isoleucine--tRNA ligase (935 aa).

The 'HIGH' region motif lies at 58–68 (PYANGSIHVGH). Glutamate 558 serves as a coordination point for L-isoleucyl-5'-AMP. The 'KMSKS' region motif lies at 599–603 (KMSKS). An ATP-binding site is contributed by lysine 602. 4 residues coordinate Zn(2+): cysteine 897, cysteine 900, cysteine 917, and cysteine 920.

It belongs to the class-I aminoacyl-tRNA synthetase family. IleS type 1 subfamily. As to quaternary structure, monomer. Zn(2+) is required as a cofactor.

The protein resides in the cytoplasm. It catalyses the reaction tRNA(Ile) + L-isoleucine + ATP = L-isoleucyl-tRNA(Ile) + AMP + diphosphate. In terms of biological role, catalyzes the attachment of isoleucine to tRNA(Ile). As IleRS can inadvertently accommodate and process structurally similar amino acids such as valine, to avoid such errors it has two additional distinct tRNA(Ile)-dependent editing activities. One activity is designated as 'pretransfer' editing and involves the hydrolysis of activated Val-AMP. The other activity is designated 'posttransfer' editing and involves deacylation of mischarged Val-tRNA(Ile). The protein is Isoleucine--tRNA ligase of Francisella tularensis subsp. tularensis (strain SCHU S4 / Schu 4).